A 550-amino-acid polypeptide reads, in one-letter code: Acyl-CoA-dependent acyltransferase MAC2 (550 aa).

Belongs to the trichothecene O-acetyltransferase family.

The protein operates within secondary metabolite biosynthesis. Acyl-CoA-dependent acyltransferase; part of the gene cluster that mediates the biosynthesis of mannosylerythritol lipids (MELs), surface-active substances that enhance the availability of water-insoluble substrates. Depending on the number of acetyl groups, mannosylerythritol lipids can be differentiated into MEL A (fully acetylated), MEL B and MEL C (monoacetylated at R-6 and R-4, respectively), and the fully deacetylated MEL D. The first step in the pathway is the generation of mannosylerythritol by the glycosyltransferase EMT1 which catalyzes the transfer of GDP-mannose to the C-4 atom of meso-erythritol. This reaction has to be stereospecific, since only mannosyl-D-erythritol is generated. The produced disaccharide is subsequently acylated with fatty acids of various lengths by the acyltransferases MAC1 and MAC2 at positions C-2 and C-3, repectively. The existence of MEL derivatives which carry an acetyl group at C-2 implies that at least MAC1 also accepts acetyl-CoA as a donor. The final step of MEL biosynthesis is the acetylation of the fully acylated mannosylerythritol lipids catalyzed by the acetyl-CoA-dependent acetyltransferase MAT1. MAT1 displays a relaxed regioselectivity and is able to transfer acetylgroups to both positions C-4 and C-6 of the mannosyl moiety. This Pseudozyma antarctica (strain T-34) (Yeast) protein is Acyl-CoA-dependent acyltransferase MAC2.